We begin with the raw amino-acid sequence, 213 residues long: Holliday junction resolvase RecU (213 aa).

Mg(2+)-binding residues include threonine 99, aspartate 101, glutamate 114, and glutamine 133.

Belongs to the RecU family. Mg(2+) is required as a cofactor.

It localises to the cytoplasm. It carries out the reaction Endonucleolytic cleavage at a junction such as a reciprocal single-stranded crossover between two homologous DNA duplexes (Holliday junction).. Functionally, endonuclease that resolves Holliday junction intermediates in genetic recombination. Cleaves mobile four-strand junctions by introducing symmetrical nicks in paired strands. Promotes annealing of linear ssDNA with homologous dsDNA. Required for DNA repair, homologous recombination and chromosome segregation. The sequence is that of Holliday junction resolvase RecU from Lactococcus lactis subsp. cremoris (strain SK11).